A 318-amino-acid chain; its full sequence is Porphobilinogen deaminase (318 aa).

Residue C241 is modified to S-(dipyrrolylmethanemethyl)cysteine.

The protein belongs to the HMBS family. As to quaternary structure, monomer. Dipyrromethane is required as a cofactor.

It catalyses the reaction 4 porphobilinogen + H2O = hydroxymethylbilane + 4 NH4(+). It participates in porphyrin-containing compound metabolism; protoporphyrin-IX biosynthesis; coproporphyrinogen-III from 5-aminolevulinate: step 2/4. Its function is as follows. Tetrapolymerization of the monopyrrole PBG into the hydroxymethylbilane pre-uroporphyrinogen in several discrete steps. The protein is Porphobilinogen deaminase of Geotalea daltonii (strain DSM 22248 / JCM 15807 / FRC-32) (Geobacter daltonii).